Consider the following 137-residue polypeptide: Large ribosomal subunit protein bL12 (137 aa).

Belongs to the bacterial ribosomal protein bL12 family. As to quaternary structure, homodimer. Part of the ribosomal stalk of the 50S ribosomal subunit. Forms a multimeric L10(L12)X complex, where L10 forms an elongated spine to which 2 to 4 L12 dimers bind in a sequential fashion. Binds GTP-bound translation factors.

Functionally, forms part of the ribosomal stalk which helps the ribosome interact with GTP-bound translation factors. Is thus essential for accurate translation. The sequence is that of Large ribosomal subunit protein bL12 from Synechococcus sp. (strain JA-3-3Ab) (Cyanobacteria bacterium Yellowstone A-Prime).